Here is a 477-residue protein sequence, read N- to C-terminus: Protein RdxB (477 aa).

Over 1-29 the chain is Cytoplasmic; it reads MTSPDTQTSSLYAKREPVFPKRVSGKFRS. The helical transmembrane segment at 30-50 threads the bilayer; sequence LKWWIMGVTLGIYYIAPWLRW. Topologically, residues 51-81 are periplasmic; sequence DRGPNLPDQAILVDLANRRFFFFMIEIWPHE. The helical transmembrane segment at 82–102 threads the bilayer; sequence FYFVAGLLIMAGLGLFLFTSA. Residues 103–154 lie on the Cytoplasmic side of the membrane; sequence AGRVWCGYACPQTVWTDLFILVERWVEGDRNARIRLLRQRWDLEKTRKYLTK. A helical membrane pass occupies residues 155-175; the sequence is WTLWLLIGLATGGAWVFYFTD. The Periplasmic portion of the chain corresponds to 176–189; the sequence is APTLLVDLLTGNAH. The chain crosses the membrane as a helical span at residues 190–210; that stretch reads PVAYITMATLTATTFAFGGFA. The Cytoplasmic portion of the chain corresponds to 211–338; that stretch reads REQICIYACP…SAWRHVFRLR (128 aa). Positions 253 to 281 constitute a 4Fe-4S ferredoxin-type domain; the sequence is EPLSPDQGDCIDCMACVNVCPMGIDIRDG. [4Fe-4S] cluster-binding residues include C262, C265, C268, C272, C286, C289, C292, and C296. Residues 339-359 traverse the membrane as a helical segment; sequence TLIYTALWSGVGLALIVALFL. Over 360-477 the chain is Periplasmic; it reads RSPIDINVTP…HDTIFNGRGN (118 aa).

It depends on [4Fe-4S] cluster as a cofactor.

The protein localises to the cell membrane. Functionally, involved in a membrane generated redox signal; required to maintain repression of photosynthesis gene expression in the presence of oxygen. The polypeptide is Protein RdxB (rdxB) (Cereibacter sphaeroides (strain ATCC 17023 / DSM 158 / JCM 6121 / CCUG 31486 / LMG 2827 / NBRC 12203 / NCIMB 8253 / ATH 2.4.1.) (Rhodobacter sphaeroides)).